A 449-amino-acid chain; its full sequence is Glucose-6-phosphate isomerase (449 aa).

Residue Glu291 is the Proton donor of the active site. Residues His312 and Lys426 contribute to the active site.

The protein belongs to the GPI family.

It is found in the cytoplasm. The enzyme catalyses alpha-D-glucose 6-phosphate = beta-D-fructose 6-phosphate. It functions in the pathway carbohydrate biosynthesis; gluconeogenesis. It participates in carbohydrate degradation; glycolysis; D-glyceraldehyde 3-phosphate and glycerone phosphate from D-glucose: step 2/4. Functionally, catalyzes the reversible isomerization of glucose-6-phosphate to fructose-6-phosphate. In Streptococcus pyogenes serotype M1, this protein is Glucose-6-phosphate isomerase.